Reading from the N-terminus, the 528-residue chain is Abrin-a (528 aa).

At glutamine 1 the chain carries Pyrrolidone carboxylic acid. Glutamate 164 is an active-site residue. 3 disulfides stabilise this stretch: cysteine 247-cysteine 269, cysteine 286-cysteine 305, and cysteine 329-cysteine 346. One can recognise a Ricin B-type lectin 1 domain in the interval tyrosine 273–glycine 400. Residues aspartate 283 to serine 325 form a 1-alpha repeat. One copy of the 1-beta repeat lies at asparagine 326 to asparagine 366. 2 N-linked (GlcNAc...) asparagine glycosylation sites follow: asparagine 361 and asparagine 401. A 1-gamma repeat occupies serine 369–asparagine 401. Residues threonine 403–leucine 527 form the Ricin B-type lectin 2 domain. Residues serine 414–serine 449 form a 2-alpha repeat. Cystine bridges form between cysteine 417–cysteine 430 and cysteine 456–cysteine 473. One copy of the 2-beta repeat lies at threonine 453–serine 492. The stretch at aspartate 495–phenylalanine 528 is one 2-gamma repeat.

This sequence in the N-terminal section; belongs to the ribosome-inactivating protein family. Type 2 RIP subfamily. Disulfide-linked dimer of A and B chains.

It carries out the reaction Endohydrolysis of the N-glycosidic bond at one specific adenosine on the 28S rRNA.. The A chain is responsible for inhibiting protein synthesis through the catalytic inactivation of 60S ribosomal subunits by removing adenine from position 4,324 of 28S rRNA. Abrin-a is more toxic than ricin. Its function is as follows. The B chain is a galactose-specific lectin that facilitates the binding of abrin to the cell membrane that precedes endocytosis. This Abrus precatorius (Indian licorice) protein is Abrin-a.